Consider the following 131-residue polypeptide: uncharacterized protein (131 aa).

A run of 2 helical transmembrane segments spans residues 52–72 and 97–117; these read LIMI…FYLV and SDII…YDVG.

The protein resides in the membrane. This is an uncharacterized protein from Acanthamoeba polyphaga mimivirus (APMV).